A 384-amino-acid polypeptide reads, in one-letter code: Guanine nucleotide-binding protein alpha-1 subunit (384 aa).

Gly-2 carries N-myristoyl glycine lipidation. A lipid anchor (S-palmitoyl cysteine) is attached at Cys-5. The G-alpha domain occupies 38 to 384; the sequence is HIRKLLLLGA…RRNLFEAGLL (347 aa). Residues 41–54 are G1 motif; it reads KLLLLGAGESGKST. Residues Glu-49, Ser-50, Gly-51, Lys-52, Ser-53, Thr-54, Asp-163, Leu-188, Thr-194, Gly-222, Asn-288, Lys-289, Asp-291, and Ala-356 each contribute to the GTP site. Ser-53 contributes to the Mg(2+) binding site. The segment at 186–194 is G2 motif; the sequence is DVLLARVRT. Thr-194 is a Mg(2+) binding site. The segment at 215–224 is G3 motif; that stretch reads YRLFDVGGQR. The tract at residues 284 to 291 is G4 motif; sequence MLFLNKFD. The G5 motif stretch occupies residues 354-359; it reads TTALDQ.

The protein belongs to the G-alpha family. G proteins are composed of 3 units; alpha, beta and gamma. The alpha chain contains the guanine nucleotide binding site. Requires Mg(2+) as cofactor.

Functionally, guanine nucleotide-binding proteins (G proteins) are involved as modulators or transducers in various transmembrane signaling systems. The chain is Guanine nucleotide-binding protein alpha-1 subunit (GPA1) from Pisum sativum (Garden pea).